The primary structure comprises 185 residues: Ribosome-recycling factor (185 aa).

Belongs to the RRF family.

The protein localises to the cytoplasm. Functionally, responsible for the release of ribosomes from messenger RNA at the termination of protein biosynthesis. May increase the efficiency of translation by recycling ribosomes from one round of translation to another. The chain is Ribosome-recycling factor from Finegoldia magna (strain ATCC 29328 / DSM 20472 / WAL 2508) (Peptostreptococcus magnus).